The chain runs to 677 residues: Zinc finger protein 526 (677 aa).

3 consecutive C2H2-type zinc fingers follow at residues 57 to 79, 109 to 131, and 141 to 164; these read FMCS…QEQH, FQCG…QDAH, and YQCG…KAQH. The disordered stretch occupies residues 167-190; the sequence is TAAAKPPVPPPLPPVTPPPPPPAP. The segment covering 172–190 has biased composition (pro residues); it reads PPVPPPLPPVTPPPPPPAP. A C2H2-type 4 zinc finger spans residues 198-220; it reads YECPECSTLCTTPEEFLEHQGTH. The span at 223-232 shows a compositional bias: basic and acidic residues; the sequence is SLEKEEHNGL. Residues 223–300 form a disordered region; sequence SLEKEEHNGL…RRASHGPASA (78 aa). The segment covering 233–257 has biased composition (acidic residues); the sequence is EEEEEDDEDDNEETEEEEEAAAEVG. 4 consecutive C2H2-type zinc fingers follow at residues 304–326, 331–353, 359–381, and 387–408; these read FYCS…GRAH, HECT…LRLH, YLCV…RRAH, and HRCR…RRTH. Residues 408–449 are disordered; sequence HAGKSGAPPSAAPPTVASAVASLAPAEPTPPPPAPPTPPAQL. Residues 410 to 433 show a composition bias toward low complexity; it reads GKSGAPPSAAPPTVASAVASLAPA. Residues 434-449 are compositionally biased toward pro residues; that stretch reads EPTPPPPAPPTPPAQL. 5 consecutive C2H2-type zinc fingers follow at residues 449-472, 479-501, 507-529, 535-557, and 580-602; these read LPCP…RAVH, HRCG…LRTH, FQCH…QLTH, YQCL…RRLH, and YYCG…QRVH. The interval 608–627 is disordered; it reads LTLQPPRSPPPAPPPPPEPQ. Residues 613–626 are compositionally biased toward pro residues; sequence PRSPPPAPPPPPEP.

It belongs to the krueppel C2H2-type zinc-finger protein family.

It is found in the nucleus. Its function is as follows. May be involved in transcriptional regulation. The polypeptide is Zinc finger protein 526 (ZNF526) (Bos taurus (Bovine)).